A 326-amino-acid chain; its full sequence is D-alanine--D-alanine ligase (326 aa).

In terms of domain architecture, ATP-grasp spans 114–313 (KRVWLQHGLR…YAELCVSIVS (200 aa)). 140 to 195 (PDRLGLPLILKPPHEGSTVGITKVAGYSDMKEGYAQAAKFDDEVLAEQFIAGRELT) contributes to the ATP binding site. Mg(2+) contacts are provided by Asp-267, Glu-280, and Asn-282.

It belongs to the D-alanine--D-alanine ligase family. It depends on Mg(2+) as a cofactor. The cofactor is Mn(2+).

The protein localises to the cytoplasm. It catalyses the reaction 2 D-alanine + ATP = D-alanyl-D-alanine + ADP + phosphate + H(+). It functions in the pathway cell wall biogenesis; peptidoglycan biosynthesis. Its function is as follows. Cell wall formation. This is D-alanine--D-alanine ligase from Bordetella petrii (strain ATCC BAA-461 / DSM 12804 / CCUG 43448).